Reading from the N-terminus, the 493-residue chain is MLNGWGRGDLRSGLCLWICGFLAFFKGSRGCVSEEQLFHTLFAHYNRFIRPVENVSDPVTVHFELAITQLANVDEVNQIMETNLWLRHVWKDYRLCWDPTEYDGIETLRVPADNIWKPDIVLYNNAVGDFQVEGKTKALLKYDGVITWTPPAIFKSSCPMDITFFPFDHQNCSLKFGSWTYDKAEIDLLIIGSKVDMNDFWENSEWEIVDASGYKHDIKYNCCEEIYTDITYSFYIRRLPMFYTINLIIPCLFISFLTVLVFYLPSDCGEKVTLCISVLLSLTVFLLVITETIPSTSLVIPLVGEYLLFTMIFVTLSIVVTVFVLNIHYRTPATHTMPKWVKTMFLQVFPSILMMRRPLDKTKEMDGVKDPKTHTKRPAKVKFTHRKEPKLLKECRHCHKSSEIAPGKRLSQQPAQWVTENSEHPPDVEDVIDSVQFIAENMKSHNETKEVEDDWKYMAMVVDRVFLWVFIIVCVFGTVGLFLQPLLGNTGAS.

A signal peptide spans 1 to 30 (MLNGWGRGDLRSGLCLWICGFLAFFKGSRG). The Extracellular portion of the chain corresponds to 31–240 (CVSEEQLFHT…TYSFYIRRLP (210 aa)). N-linked (GlcNAc...) asparagine glycans are attached at residues N54 and N171. Intrachain disulfides connect C158–C172 and C222–C223. The next 3 helical transmembrane spans lie at 241-265 (MFYT…FYLP), 272-290 (VTLC…LVIT), and 306-327 (YLLF…VLNI). Residues 328 to 464 (HYRTPATHTM…WKYMAMVVDR (137 aa)) are Cytoplasmic-facing. S401 bears the Phosphoserine mark. The chain crosses the membrane as a helical span at residues 465 to 484 (VFLWVFIIVCVFGTVGLFLQ).

This sequence belongs to the ligand-gated ion channel (TC 1.A.9) family. Acetylcholine receptor (TC 1.A.9.1) subfamily. Alpha-6/CHRNA6 sub-subfamily. Neuronal AChR is composed of two different types of subunits: alpha and non-alpha (beta). CHRNA6/alpha-6 subunit can be combined to CHRNB2/beta-2 and CHRNA4/alpha-4 to give rise to functional receptors. Interacts with LYPD6. Predominantly expressed in only a few brain areas, including dopaminergic neurons, norepirephrine neurons and cells of the visual system.

The protein localises to the synaptic cell membrane. The catalysed reaction is Ca(2+)(in) = Ca(2+)(out). It catalyses the reaction K(+)(in) = K(+)(out). The enzyme catalyses Na(+)(in) = Na(+)(out). Activated by a myriad of ligands such as acetylcholine, cytisine and nicotine. CHRNA6 nAChR activity is inhibited by the antagonists alpha-conotoxin MII and PIA, a small disulfide-constrained peptides from cone snails. In terms of biological role, component of neuronal acetylcholine receptors (nAChRs) that function as pentameric, ligand-gated cation channels with high calcium permeability among other activities. nAChRs are excitatory neurotrasnmitter receptors formed by a collection of nAChR subunits known to mediate synaptic transmission in the nervous system and the neuromuscular junction. Each nAchR subunit confers differential attributes to channel properties, including activation, deactivation and desensitization kinetics, pH sensitivity, cation permeability, and binding to allosteric modulators. CHRNA6 forms pentameric channels with CHRNB2 and CHRNA4 that exhibit high sensitivity to ACh and nicotine and are predominantly expressed in only a few brain areas, including dopaminergic neurons, norepirephrine neurons and cells of the visual system. nAChrs containing CHRNA6 subunits mediate endogenous cholinergic modulation of dopamine and gamma-aminobutyric acid (GABA) release in response to nicotine at nerve terminals. This chain is Neuronal acetylcholine receptor subunit alpha-6 (Chrna6), found in Rattus norvegicus (Rat).